Here is a 1446-residue protein sequence, read N- to C-terminus: ABC transporter G family member 53 (1446 aa).

The 274-residue stretch at 153–426 folds into the ABC transporter 1 domain; sequence ANTLHITPNR…FESVGFKCPE (274 aa). An ATP-binding site is contributed by 186 to 193; the sequence is GPPGAGKT. The region spanning 504–717 is the ABC transmembrane type-2 1 domain; it reads ELLKANIDRE…AQNAISVNEF (214 aa). A run of 6 helical transmembrane segments spans residues 523 to 543, 555 to 575, 610 to 630, 641 to 661, 666 to 686, and 752 to 772; these read VYIF…TVFI, GGIY…NGLA, TPLS…VIGF, FLLL…IAGF, VVAS…GGFI, and IGVG…TICL. The ABC transporter 2 domain occupies 849–1101; that stretch reads ITFEDIRYSV…ELIRYFESIE (253 aa). 894–901 is a binding site for ATP; the sequence is GVSGAGKT. The region spanning 1174-1388 is the ABC transmembrane type-2 2 domain; the sequence is TQCLACLWKQ…TLYGLVTSQF (215 aa). A run of 7 helical transmembrane segments spans residues 1195–1215, 1225–1242, 1281–1301, 1308–1328, 1338–1358, 1363–1383, and 1415–1435; these read AVKY…FWGV, LFNA…MGVQ, LPYI…MIGF, FFWY…YGMM, VASV…GFII, IPIW…LYGL, and FLWV…FLFG.

Belongs to the ABC transporter superfamily. ABCG family. PDR (TC 3.A.1.205) subfamily.

The protein resides in the membrane. May be a general defense protein. In Oryza sativa subsp. japonica (Rice), this protein is ABC transporter G family member 53.